An 81-amino-acid polypeptide reads, in one-letter code: MSILQIVAIVAIIVALILAIVVWTIVYIEYKRLLRQRKIDWLIDRIRERAEDSGNESEGDTEELSTLVEMEPDNFRNDNDM.

The Extracellular segment spans residues 1-7; that stretch reads MSILQIV. A helical transmembrane segment spans residues 8–28; sequence AIVAIIVALILAIVVWTIVYI. Topologically, residues 29-81 are cytoplasmic; the sequence is EYKRLLRQRKIDWLIDRIRERAEDSGNESEGDTEELSTLVEMEPDNFRNDNDM. Residues 50–81 are disordered; it reads AEDSGNESEGDTEELSTLVEMEPDNFRNDNDM. Residues Ser53 and Ser57 each carry the phosphoserine; by host CK2 modification. Positions 53-63 are enriched in acidic residues; the sequence is SGNESEGDTEE.

It belongs to the HIV-1 VPU protein family. In terms of assembly, homopentamer. Interacts with host CD4 and BRTC; these interactions induce proteasomal degradation of CD4. Interacts with host BST2; this interaction leads to the degradation of host BST2. Interacts with host FBXW11. Interacts with host AP1M1; this interaction plays a role in the mistrafficking and subsequent degradation of host BST2. Interacts with host RANBP2; this interaction allows Vpu to down-regulate host BLM sumoylation. Phosphorylated by host CK2. This phosphorylation is necessary for interaction with human BTRC and degradation of CD4.

The protein resides in the host membrane. With respect to regulation, ion channel activity is inhibited by hexamethylene amiloride in vitro. Functionally, enhances virion budding by targeting host CD4 and Tetherin/BST2 to proteasome degradation. Degradation of CD4 prevents any unwanted premature interactions between viral Env and its host receptor CD4 in the endoplasmic reticulum. Degradation of antiretroviral protein Tetherin/BST2 is important for virion budding, as BST2 tethers new viral particles to the host cell membrane. Mechanistically, Vpu bridges either CD4 or BST2 to BTRC, a substrate recognition subunit of the Skp1/Cullin/F-box protein E3 ubiquitin ligase, induces their ubiquitination and subsequent proteasomal degradation. The alteration of the E3 ligase specificity by Vpu seems to promote the degradation of host IKBKB, leading to NF-kappa-B down-regulation and subsequent apoptosis. Acts as a viroporin that forms an oligomeric ion channel in membranes. Modulates the host DNA repair mechanisms to promote degradation of nuclear viral cDNA in cells that are already productively infected in order to suppress immune sensing and proviral hyper-integration (superinfection). Manipulates PML-NBs and modulates SUMOylation of host BLM protein thereby enhancing its DNA-end processing activity toward viral unintegrated linear DNA. Also inhibits RAD52-mediated homologous repair of viral cDNA, preventing the generation of dead-end circular forms of single copies of the long terminal repeat and permitting sustained nucleolytic attack. The sequence is that of Protein Vpu from Human immunodeficiency virus type 1 (HIV-1).